A 143-amino-acid chain; its full sequence is 3-dehydroquinate dehydratase (143 aa).

Tyr-22 (proton acceptor) is an active-site residue. Asn-73, His-79, and Asp-86 together coordinate substrate. The active-site Proton donor is His-99. Residues 100–101 (IS) and Arg-110 each bind substrate.

It belongs to the type-II 3-dehydroquinase family. In terms of assembly, homododecamer.

The enzyme catalyses 3-dehydroquinate = 3-dehydroshikimate + H2O. It functions in the pathway metabolic intermediate biosynthesis; chorismate biosynthesis; chorismate from D-erythrose 4-phosphate and phosphoenolpyruvate: step 3/7. Functionally, catalyzes a trans-dehydration via an enolate intermediate. The chain is 3-dehydroquinate dehydratase from Mycobacterium avium (strain 104).